A 940-amino-acid polypeptide reads, in one-letter code: Isoleucine--tRNA ligase (940 aa).

Positions 58 to 68 match the 'HIGH' region motif; it reads PYANGSIHIGH. Residue E564 participates in L-isoleucyl-5'-AMP binding. The 'KMSKS' region signature appears at 605–609; that stretch reads KMSKS. K608 contacts ATP. Residues C903, C906, C923, and C926 each contribute to the Zn(2+) site.

The protein belongs to the class-I aminoacyl-tRNA synthetase family. IleS type 1 subfamily. In terms of assembly, monomer. The cofactor is Zn(2+).

Its subcellular location is the cytoplasm. The enzyme catalyses tRNA(Ile) + L-isoleucine + ATP = L-isoleucyl-tRNA(Ile) + AMP + diphosphate. Catalyzes the attachment of isoleucine to tRNA(Ile). As IleRS can inadvertently accommodate and process structurally similar amino acids such as valine, to avoid such errors it has two additional distinct tRNA(Ile)-dependent editing activities. One activity is designated as 'pretransfer' editing and involves the hydrolysis of activated Val-AMP. The other activity is designated 'posttransfer' editing and involves deacylation of mischarged Val-tRNA(Ile). The sequence is that of Isoleucine--tRNA ligase from Shewanella putrefaciens (strain CN-32 / ATCC BAA-453).